A 78-amino-acid polypeptide reads, in one-letter code: Sec-independent protein translocase protein TatA (78 aa).

Residues 1 to 21 (MGGISIWQLLIIAVIVVLLFG) traverse the membrane as a helical segment. Over residues 47–59 (ESEKKDADFEPKS) the composition is skewed to basic and acidic residues. The disordered stretch occupies residues 47-78 (ESEKKDADFEPKSLEQQNKQAATESKKDKEQA). Residues 60 to 69 (LEQQNKQAAT) are compositionally biased toward polar residues.

This sequence belongs to the TatA/E family. The Tat system comprises two distinct complexes: a TatABC complex, containing multiple copies of TatA, TatB and TatC subunits, and a separate TatA complex, containing only TatA subunits. Substrates initially bind to the TatABC complex, which probably triggers association of the separate TatA complex to form the active translocon.

It localises to the cell inner membrane. Functionally, part of the twin-arginine translocation (Tat) system that transports large folded proteins containing a characteristic twin-arginine motif in their signal peptide across membranes. TatA could form the protein-conducting channel of the Tat system. This is Sec-independent protein translocase protein TatA from Vibrio vulnificus (strain YJ016).